The following is a 134-amino-acid chain: Phosphoribosyl-AMP cyclohydrolase (134 aa).

Asp-93 lines the Mg(2+) pocket. Residue Cys-94 participates in Zn(2+) binding. Asp-95 and Asp-97 together coordinate Mg(2+). Residues Cys-112 and Cys-119 each coordinate Zn(2+).

This sequence belongs to the PRA-CH family. As to quaternary structure, homodimer. Mg(2+) serves as cofactor. Zn(2+) is required as a cofactor.

The protein resides in the cytoplasm. It carries out the reaction 1-(5-phospho-beta-D-ribosyl)-5'-AMP + H2O = 1-(5-phospho-beta-D-ribosyl)-5-[(5-phospho-beta-D-ribosylamino)methylideneamino]imidazole-4-carboxamide. It participates in amino-acid biosynthesis; L-histidine biosynthesis; L-histidine from 5-phospho-alpha-D-ribose 1-diphosphate: step 3/9. Functionally, catalyzes the hydrolysis of the adenine ring of phosphoribosyl-AMP. This Caulobacter sp. (strain K31) protein is Phosphoribosyl-AMP cyclohydrolase.